We begin with the raw amino-acid sequence, 329 residues long: Elongation factor Ts (329 aa).

The interval T79–V82 is involved in Mg(2+) ion dislocation from EF-Tu.

The protein belongs to the EF-Ts family.

Its subcellular location is the cytoplasm. Its function is as follows. Associates with the EF-Tu.GDP complex and induces the exchange of GDP to GTP. It remains bound to the aminoacyl-tRNA.EF-Tu.GTP complex up to the GTP hydrolysis stage on the ribosome. This Phocaeicola vulgatus (strain ATCC 8482 / DSM 1447 / JCM 5826 / CCUG 4940 / NBRC 14291 / NCTC 11154) (Bacteroides vulgatus) protein is Elongation factor Ts.